Consider the following 163-residue polypeptide: 6,7-dimethyl-8-ribityllumazine synthase (163 aa).

5-amino-6-(D-ribitylamino)uracil is bound by residues Phe-22, Thr-56 to Glu-58, and Ala-80 to Ile-82. Gly-85–Thr-86 is a binding site for (2S)-2-hydroxy-3-oxobutyl phosphate. The Proton donor role is filled by His-88. Met-113 contacts 5-amino-6-(D-ribitylamino)uracil. Arg-127 provides a ligand contact to (2S)-2-hydroxy-3-oxobutyl phosphate.

Belongs to the DMRL synthase family.

The catalysed reaction is (2S)-2-hydroxy-3-oxobutyl phosphate + 5-amino-6-(D-ribitylamino)uracil = 6,7-dimethyl-8-(1-D-ribityl)lumazine + phosphate + 2 H2O + H(+). Its pathway is cofactor biosynthesis; riboflavin biosynthesis; riboflavin from 2-hydroxy-3-oxobutyl phosphate and 5-amino-6-(D-ribitylamino)uracil: step 1/2. In terms of biological role, catalyzes the formation of 6,7-dimethyl-8-ribityllumazine by condensation of 5-amino-6-(D-ribitylamino)uracil with 3,4-dihydroxy-2-butanone 4-phosphate. This is the penultimate step in the biosynthesis of riboflavin. The protein is 6,7-dimethyl-8-ribityllumazine synthase of Anaeromyxobacter sp. (strain Fw109-5).